Reading from the N-terminus, the 468-residue chain is Aldehyde dehydrogenase family 3 member B1 (468 aa).

N-acetylmethionine is present on methionine 1. Glycine 188–glycine 193 contributes to the NAD(+) binding site. Catalysis depends on residues glutamate 210 and cysteine 244. Residues cysteine 462 and cysteine 463 are each lipidated (S-palmitoyl cysteine). The residue at position 465 (cysteine 465) is a Cysteine methyl ester. Cysteine 465 is lipidated: S-geranylgeranyl cysteine. Residues threonine 466 to leucine 468 constitute a propeptide, removed in mature form.

It belongs to the aldehyde dehydrogenase family. In terms of processing, dually lipidated in the C-terminus; prenylation occurs prior to, and is a prerequisite for palmitoylation. It is also required for activity towards long-chain substrates. Highly expressed in kidney and liver. In brain is expressed at moderate levels in cortex, striatum and hippocampus, and at lower levels in brainstem and cerebellum.

Its subcellular location is the cell membrane. It catalyses the reaction an aldehyde + NAD(+) + H2O = a carboxylate + NADH + 2 H(+). It carries out the reaction a long-chain fatty aldehyde + NAD(+) + H2O = a long-chain fatty acid + NADH + 2 H(+). The catalysed reaction is a medium-chain fatty aldehyde + NAD(+) + H2O = a medium-chain fatty acid + NADH + 2 H(+). The enzyme catalyses octanal + NAD(+) + H2O = octanoate + NADH + 2 H(+). It catalyses the reaction nonanal + NAD(+) + H2O = nonanoate + NADH + 2 H(+). It carries out the reaction hexadecanoate + NADH + 2 H(+) = hexadecanal + NAD(+) + H2O. The catalysed reaction is (2E)-octenal + NAD(+) + H2O = (2E)-octenoate + NADH + 2 H(+). The enzyme catalyses (E)-non-2-enal + NAD(+) + H2O = (E)-non-2-enoate + NADH + 2 H(+). It catalyses the reaction (E)-4-hydroxynon-2-enal + NAD(+) + H2O = (E)-4-hydroxynon-2-enoate + NADH + 2 H(+). It carries out the reaction (2E)-hexadecenal + NAD(+) + H2O = (E)-hexadec-2-enoate + NADH + 2 H(+). The catalysed reaction is benzaldehyde + NAD(+) + H2O = benzoate + NADH + 2 H(+). The enzyme catalyses an aldehyde + NADP(+) + H2O = a carboxylate + NADPH + 2 H(+). It catalyses the reaction a medium-chain fatty aldehyde + NADP(+) + H2O = a medium-chain fatty acid + NADPH + 2 H(+). It carries out the reaction hexanal + NADP(+) + H2O = hexanoate + NADPH + 2 H(+). The catalysed reaction is octanal + NADP(+) + H2O = octanoate + NADPH + 2 H(+). The enzyme catalyses nonanal + NADP(+) + H2O = nonanoate + NADPH + 2 H(+). It catalyses the reaction (2E)-octenal + NADP(+) + H2O = (2E)-octenoate + NADPH + 2 H(+). It carries out the reaction (E)-non-2-enal + NADP(+) + H2O = (E)-non-2-enoate + NADPH + 2 H(+). The catalysed reaction is (E)-4-hydroxynon-2-enal + NADP(+) + H2O = (E)-4-hydroxynon-2-enoate + NADPH + 2 H(+). The enzyme catalyses benzaldehyde + NADP(+) + H2O = benzoate + NADPH + 2 H(+). The protein operates within alcohol metabolism; ethanol degradation; acetate from ethanol: step 2/2. Its function is as follows. Oxidizes medium and long chain saturated and unsaturated fatty aldehydes generated in the plasma membrane into non-toxic fatty acids. May have a protective role against the cytotoxicity induced by lipid peroxidation. Short-chain fatty aldehydes are not good substrates. Can use both NADP(+) and NAD(+) as electron acceptor in vitro, however in vivo preference will depend on their tissue levels. Low activity towards acetaldehyde and 3,4-dihydroxyphenylacetaldehyde. Able to metabolize aromatic aldehydes such as benzaldehyde to their acid form. The chain is Aldehyde dehydrogenase family 3 member B1 (Aldh3b1) from Mus musculus (Mouse).